Reading from the N-terminus, the 416-residue chain is uncharacterized protein (416 aa).

This is an uncharacterized protein from Methanocaldococcus jannaschii (strain ATCC 43067 / DSM 2661 / JAL-1 / JCM 10045 / NBRC 100440) (Methanococcus jannaschii).